Reading from the N-terminus, the 154-residue chain is S-ribosylhomocysteine lyase (154 aa).

Histidine 57, histidine 61, and cysteine 124 together coordinate Fe cation.

Belongs to the LuxS family. As to quaternary structure, homodimer. Requires Fe cation as cofactor.

The catalysed reaction is S-(5-deoxy-D-ribos-5-yl)-L-homocysteine = (S)-4,5-dihydroxypentane-2,3-dione + L-homocysteine. Its function is as follows. Involved in the synthesis of autoinducer 2 (AI-2) which is secreted by bacteria and is used to communicate both the cell density and the metabolic potential of the environment. The regulation of gene expression in response to changes in cell density is called quorum sensing. Catalyzes the transformation of S-ribosylhomocysteine (RHC) to homocysteine (HC) and 4,5-dihydroxy-2,3-pentadione (DPD). This chain is S-ribosylhomocysteine lyase, found in Exiguobacterium sibiricum (strain DSM 17290 / CCUG 55495 / CIP 109462 / JCM 13490 / 255-15).